A 303-amino-acid chain; its full sequence is Ribosomal protein uL3 glutamine methyltransferase (303 aa).

This sequence belongs to the protein N5-glutamine methyltransferase family. PrmB subfamily.

The catalysed reaction is L-glutaminyl-[ribosomal protein uL3] + S-adenosyl-L-methionine = N(5)-methyl-L-glutaminyl-[ribosomal protein uL3] + S-adenosyl-L-homocysteine + H(+). Methylates large ribosomal subunit protein uL3 on a specific glutamine residue. The polypeptide is Ribosomal protein uL3 glutamine methyltransferase (Neisseria meningitidis serogroup A / serotype 4A (strain DSM 15465 / Z2491)).